Here is a 352-residue protein sequence, read N- to C-terminus: UDP-N-acetylglucosamine--N-acetylmuramyl-(pentapeptide) pyrophosphoryl-undecaprenol N-acetylglucosamine transferase (352 aa).

S195 and Q287 together coordinate UDP-N-acetyl-alpha-D-glucosamine.

The protein belongs to the glycosyltransferase 28 family. MurG subfamily.

It is found in the cell membrane. It carries out the reaction Mur2Ac(oyl-L-Ala-gamma-D-Glu-L-Lys-D-Ala-D-Ala)-di-trans,octa-cis-undecaprenyl diphosphate + UDP-N-acetyl-alpha-D-glucosamine = beta-D-GlcNAc-(1-&gt;4)-Mur2Ac(oyl-L-Ala-gamma-D-Glu-L-Lys-D-Ala-D-Ala)-di-trans,octa-cis-undecaprenyl diphosphate + UDP + H(+). The protein operates within cell wall biogenesis; peptidoglycan biosynthesis. Its function is as follows. Cell wall formation. Catalyzes the transfer of a GlcNAc subunit on undecaprenyl-pyrophosphoryl-MurNAc-pentapeptide (lipid intermediate I) to form undecaprenyl-pyrophosphoryl-MurNAc-(pentapeptide)GlcNAc (lipid intermediate II). The polypeptide is UDP-N-acetylglucosamine--N-acetylmuramyl-(pentapeptide) pyrophosphoryl-undecaprenol N-acetylglucosamine transferase (Streptococcus pneumoniae (strain Hungary19A-6)).